We begin with the raw amino-acid sequence, 539 residues long: MLSMIKQQGAAADSRRGQALLLNISAGKGLQNVLKTNLGPRGTLKMLVGGGGDIKLTKDGKVLLHEMQIQHPTAALIARTATAQDDITGDGTTTNVITIGELLKQSERYLQENIHPRIIAEGFELAKDRCLAFLEEFKQTSQDTLDRELLISIAKTSLRTKLPADLADQLTEQVVDALLLIHKPEQPLDLFMVEIMTMQHRTDGHCSLIKGLVLDHGTRHPDMPKKLTNCFILTCNVSLEYEKTEVNANFLYKDHETRSRMIDGEHKLVAAKCRQIIELKNHVCDTPDKNFVVINQKGIDPICLDMLAKAGIMGLRRAKRRNMERLTLACGGTAMNSLEDLTPDCLGHADLVYEQTLGEEKYTFVEGVKNPFSCTVLIKGPTKHQIEQIKDALRDGLRAVKNTIEDKCVVPGGGAFQIAAYADLMKFKETITGRTKLGIQAFADALLVVPKTLAQNSGFDPMDTIIKLQEEYAKGHIVGLDVESGEPMDPVSEGIFDQYSVLKQVYRSSPVIASQLLLIDEIIKAGKGMRGSSVPEGQE.

The protein belongs to the TCP-1 chaperonin family. Heterooligomeric complex of about 850 to 900 kDa that forms two stacked rings, 12 to 16 nm in diameter.

The protein resides in the cytoplasm. Functionally, molecular chaperone; assists the folding of proteins upon ATP hydrolysis. Known to play a role, in vitro, in the folding of actin and tubulin. This is T-complex protein 1 subunit zeta (cct6) from Dictyostelium discoideum (Social amoeba).